The primary structure comprises 235 residues: Urease accessory protein UreF (235 aa).

The protein belongs to the UreF family. As to quaternary structure, ureD, UreF and UreG form a complex that acts as a GTP-hydrolysis-dependent molecular chaperone, activating the urease apoprotein by helping to assemble the nickel containing metallocenter of UreC. The UreE protein probably delivers the nickel.

It is found in the cytoplasm. Required for maturation of urease via the functional incorporation of the urease nickel metallocenter. The sequence is that of Urease accessory protein UreF from Haemophilus influenzae (strain PittGG).